We begin with the raw amino-acid sequence, 432 residues long: 5-methylthioadenosine/S-adenosylhomocysteine deaminase (432 aa).

2 residues coordinate Zn(2+): H62 and H64. Residues E91 and H184 each contribute to the substrate site. H211 is a Zn(2+) binding site. Positions 214 and 299 each coordinate substrate. D299 serves as a coordination point for Zn(2+).

This sequence belongs to the metallo-dependent hydrolases superfamily. MTA/SAH deaminase family. The cofactor is Zn(2+).

The catalysed reaction is S-adenosyl-L-homocysteine + H2O + H(+) = S-inosyl-L-homocysteine + NH4(+). It catalyses the reaction S-methyl-5'-thioadenosine + H2O + H(+) = S-methyl-5'-thioinosine + NH4(+). Catalyzes the deamination of 5-methylthioadenosine and S-adenosyl-L-homocysteine into 5-methylthioinosine and S-inosyl-L-homocysteine, respectively. Is also able to deaminate adenosine. The chain is 5-methylthioadenosine/S-adenosylhomocysteine deaminase from Haloarcula marismortui (strain ATCC 43049 / DSM 3752 / JCM 8966 / VKM B-1809) (Halobacterium marismortui).